The following is a 383-amino-acid chain: Alanine racemase (383 aa).

The Proton acceptor; specific for D-alanine role is filled by K50. At K50 the chain carries N6-(pyridoxal phosphate)lysine. R151 serves as a coordination point for substrate. The Proton acceptor; specific for L-alanine role is filled by Y279. M327 contacts substrate.

The protein belongs to the alanine racemase family. Pyridoxal 5'-phosphate serves as cofactor.

The catalysed reaction is L-alanine = D-alanine. Its pathway is amino-acid biosynthesis; D-alanine biosynthesis; D-alanine from L-alanine: step 1/1. Its function is as follows. Catalyzes the interconversion of L-alanine and D-alanine. May also act on other amino acids. The sequence is that of Alanine racemase (alr) from Chlorobaculum tepidum (strain ATCC 49652 / DSM 12025 / NBRC 103806 / TLS) (Chlorobium tepidum).